The primary structure comprises 305 residues: Aspartate carbamoyltransferase catalytic subunit (305 aa).

R56 and T57 together coordinate carbamoyl phosphate. K84 contributes to the L-aspartate binding site. The carbamoyl phosphate site is built by R106, H136, and Q139. R169 and R221 together coordinate L-aspartate. Residues A262 and P263 each coordinate carbamoyl phosphate.

Belongs to the aspartate/ornithine carbamoyltransferase superfamily. ATCase family. As to quaternary structure, heterododecamer (2C3:3R2) of six catalytic PyrB chains organized as two trimers (C3), and six regulatory PyrI chains organized as three dimers (R2).

The catalysed reaction is carbamoyl phosphate + L-aspartate = N-carbamoyl-L-aspartate + phosphate + H(+). It functions in the pathway pyrimidine metabolism; UMP biosynthesis via de novo pathway; (S)-dihydroorotate from bicarbonate: step 2/3. In terms of biological role, catalyzes the condensation of carbamoyl phosphate and aspartate to form carbamoyl aspartate and inorganic phosphate, the committed step in the de novo pyrimidine nucleotide biosynthesis pathway. This chain is Aspartate carbamoyltransferase catalytic subunit, found in Streptococcus sanguinis (strain SK36).